The chain runs to 284 residues: MRGARLMGALLALAGLLQGALALRMAAFNIRTFGETKMSNATLSKYIVQILSRYDVAVVQEVRDSHLTAVGKLLDTLNQDDPNAYHYVVSEPLGRSSYKERYLFLFRPDRVSVLDSYQYDDGCEPCGNDTFSREPAIVRFHSPLTEVKEFAVVPLHAAPLDAVAEIDALYDVYLDVQHKWDLEDIVLMGDFNAGCSYVAASQWSSIRLRTNPAFQWLIPDTADTTSTSTHCAYDRIVVAGSQLQHAVVPESAAPFNFQVAYGLSSQLAQAISDHYPVEVTLKRA.

Positions 1–22 (MRGARLMGALLALAGLLQGALA) are cleaved as a signal peptide. Asparagine 40 carries an N-linked (GlcNAc...) asparagine glycan. Glutamate 100 is an active-site residue. A disulfide bridge connects residues cysteine 123 and cysteine 126. N-linked (GlcNAc...) asparagine glycosylation occurs at asparagine 128. Histidine 156 is a catalytic residue. An intrachain disulfide couples cysteine 195 to cysteine 231.

This sequence belongs to the DNase I family. Requires Ca(2+) as cofactor. The cofactor is Mg(2+). In terms of tissue distribution, highest expression in pancreas.

It is found in the secreted. It localises to the zymogen granule. The protein resides in the nucleus envelope. It catalyses the reaction Endonucleolytic cleavage to 5'-phosphodinucleotide and 5'-phosphooligonucleotide end-products.. In terms of biological role, serum endocuclease secreted into body fluids by a wide variety of exocrine and endocrine organs. Expressed by non-hematopoietic tissues and preferentially cleaves protein-free DNA. Among other functions, seems to be involved in cell death by apoptosis. Binds specifically to G-actin and blocks actin polymerization. Together with DNASE1L3, plays a key role in degrading neutrophil extracellular traps (NETs). NETs are mainly composed of DNA fibers and are released by neutrophils to bind pathogens during inflammation. Degradation of intravascular NETs by DNASE1 and DNASE1L3 is required to prevent formation of clots that obstruct blood vessels and cause organ damage following inflammation. This is Deoxyribonuclease-1 (DNASE1) from Canis lupus familiaris (Dog).